A 329-amino-acid chain; its full sequence is Replication factor C small subunit 1 (329 aa).

44-51 lines the ATP pocket; sequence GPPGTGKT.

This sequence belongs to the activator 1 small subunits family. RfcS subfamily. Heteromultimer composed of small subunits (RfcS) and large subunits (RfcL).

Its function is as follows. Part of the RFC clamp loader complex which loads the PCNA sliding clamp onto DNA. In Pyrobaculum islandicum (strain DSM 4184 / JCM 9189 / GEO3), this protein is Replication factor C small subunit 1.